The primary structure comprises 107 residues: uncharacterized protein (107 aa).

4 helical membrane passes run 9 to 28 (FLVFISFFIILLGILDLIME), 33 to 50 (SYIIILVGLASLFASLNI), 55 to 72 (LAIAVCIAAAVFIEAIHV), and 77 to 99 (YRVILYAIGSLPLIISVGSYLKG).

It is found in the cell membrane. This is an uncharacterized protein from Archaeoglobus fulgidus (strain ATCC 49558 / DSM 4304 / JCM 9628 / NBRC 100126 / VC-16).